Consider the following 772-residue polypeptide: U3 small nucleolar RNA-associated protein 25 homolog (772 aa).

Residues 1–179 (MGKRRNRGRS…SEEFTDVKHE (179 aa)) form a disordered region. 2 promotes p53/TP53 degradation regions span residues 1 to 201 (MGKR…SQRP) and 589 to 651 (VQLP…KKEE). Ser10 carries the phosphoserine modification. Positions 25 to 43 (RDFGEEHPFYDRVSKKEAK) are enriched in basic and acidic residues. Phosphoserine occurs at positions 52, 60, and 64. A compositionally biased stretch (basic and acidic residues) spans 54-70 (DSSHSESESESEQEHVS). Positions 84–124 (EEEEEEEEEEEEEEEEEEEEEEEEEDDSAVGDAEMNEEAGS) are enriched in acidic residues. The segment covering 127-136 (GSVGEAAVSE) has biased composition (low complexity). Residues 169–179 (SSEEFTDVKHE) are compositionally biased toward basic and acidic residues. Residues 652 to 713 (LNFTHICEYT…YELPTYPHFY (62 aa)) are represses p53/TP53 degradation.

Belongs to the UTP25 family. Interacts with CAPN3; the interaction is required for CAPN3 translocation to the nucleolus. Post-translationally, phosphorylated. Phosphorylation is required to promote p53/TP53 degradation in the nucleolus which promotes cell cycle progression and liver development. As to expression, expressed in all tissues tested: brain, small intestine, large intestine, stomach, liver, spleen, thymus, lung, kidney and testes (at protein level).

The protein localises to the nucleus. It is found in the nucleolus. Component of the ribosomal small subunit processome for the biogenesis of ribosomes, functions in pre-ribosomal RNA (pre-rRNA) processing. Essential for embryonic development in part through the regulation of p53 pathway. Controls the expansion growth of digestive organs and liver. Also involved in the sympathetic neuronal development. Mediates, with CAPN3, the proteasome-independent degradation of p53/TP53. This chain is U3 small nucleolar RNA-associated protein 25 homolog, found in Mus musculus (Mouse).